Consider the following 386-residue polypeptide: Dual-specificity RNA methyltransferase RlmN (386 aa).

Glu-96 (proton acceptor) is an active-site residue. Residues 102–340 (ENDRATLCVS…VITRRTRGED (239 aa)) enclose the Radical SAM core domain. Cys-109 and Cys-345 are joined by a disulfide. Residues Cys-116, Cys-120, and Cys-123 each contribute to the [4Fe-4S] cluster site. S-adenosyl-L-methionine-binding positions include 170-171 (GE), Ser-202, 224-226 (SIH), and Asn-302. Residue Cys-345 is the S-methylcysteine intermediate of the active site.

This sequence belongs to the radical SAM superfamily. RlmN family. Requires [4Fe-4S] cluster as cofactor.

The protein resides in the cytoplasm. It carries out the reaction adenosine(2503) in 23S rRNA + 2 reduced [2Fe-2S]-[ferredoxin] + 2 S-adenosyl-L-methionine = 2-methyladenosine(2503) in 23S rRNA + 5'-deoxyadenosine + L-methionine + 2 oxidized [2Fe-2S]-[ferredoxin] + S-adenosyl-L-homocysteine. The enzyme catalyses adenosine(37) in tRNA + 2 reduced [2Fe-2S]-[ferredoxin] + 2 S-adenosyl-L-methionine = 2-methyladenosine(37) in tRNA + 5'-deoxyadenosine + L-methionine + 2 oxidized [2Fe-2S]-[ferredoxin] + S-adenosyl-L-homocysteine. Functionally, specifically methylates position 2 of adenine 2503 in 23S rRNA and position 2 of adenine 37 in tRNAs. m2A2503 modification seems to play a crucial role in the proofreading step occurring at the peptidyl transferase center and thus would serve to optimize ribosomal fidelity. In Colwellia psychrerythraea (strain 34H / ATCC BAA-681) (Vibrio psychroerythus), this protein is Dual-specificity RNA methyltransferase RlmN.